The chain runs to 197 residues: ATP-dependent Clp protease proteolytic subunit 2 (197 aa).

The Nucleophile role is filled by S97. H122 is a catalytic residue.

The protein belongs to the peptidase S14 family. Fourteen ClpP subunits assemble into 2 heptameric rings which stack back to back to give a disk-like structure with a central cavity, resembling the structure of eukaryotic proteasomes.

The protein localises to the cytoplasm. The catalysed reaction is Hydrolysis of proteins to small peptides in the presence of ATP and magnesium. alpha-casein is the usual test substrate. In the absence of ATP, only oligopeptides shorter than five residues are hydrolyzed (such as succinyl-Leu-Tyr-|-NHMec, and Leu-Tyr-Leu-|-Tyr-Trp, in which cleavage of the -Tyr-|-Leu- and -Tyr-|-Trp bonds also occurs).. Cleaves peptides in various proteins in a process that requires ATP hydrolysis. Has a chymotrypsin-like activity. Plays a major role in the degradation of misfolded proteins. This is ATP-dependent Clp protease proteolytic subunit 2 from Leptospira interrogans serogroup Icterohaemorrhagiae serovar copenhageni (strain Fiocruz L1-130).